The chain runs to 508 residues: Lysine--tRNA ligase (508 aa).

Positions 418 and 425 each coordinate Mg(2+).

It belongs to the class-II aminoacyl-tRNA synthetase family. In terms of assembly, homodimer. It depends on Mg(2+) as a cofactor.

It is found in the cytoplasm. It carries out the reaction tRNA(Lys) + L-lysine + ATP = L-lysyl-tRNA(Lys) + AMP + diphosphate. The chain is Lysine--tRNA ligase from Burkholderia ambifaria (strain MC40-6).